A 584-amino-acid chain; its full sequence is Cytochrome c oxidase subunit 1 (584 aa).

A disordered region spans residues 1–25 (MTAVAPRVDGHVAPQRPEPTGHARK). The chain crosses the membrane as a helical span at residues 43-63 (IMYIIMSFSFFFLGGLMALLI). Fe(II)-heme a is bound at residue H87. 6 consecutive transmembrane segments (helical) span residues 90–110 (VMLL…VLPL), 122–142 (LNAF…TGFL), 171–191 (MWIV…INML), 214–234 (IFVV…AALG), 259–279 (LFWF…FGIV), and 292–312 (FGYV…MAVW). Cu cation-binding residues include H265 and Y269. The segment at residues 265-269 (HPEVY) is a cross-link (1'-histidyl-3'-tyrosine (His-Tyr)). 2 residues coordinate Cu cation: H314 and H315. The next 2 helical transmembrane spans lie at 316-336 (MFVT…LISV) and 360-380 (MIWS…GIML). Position 398 (H398) interacts with heme a3. 3 helical membrane passes run 399–419 (FHYT…YFWF), 434–454 (IHFW…HWVG), and 477–497 (ISTV…WNVF). Residue H400 participates in Fe(II)-heme a binding. The tract at residues 564–584 (HDDINAPELGTAPALASDSSR) is disordered.

In terms of assembly, associates with subunits II, III and IV to form cytochrome c oxidase. The 4 subunit cytochrome c oxidase forms a supercomplex with the menaquinol-cytochrome c reductase complex (cytochrome bc1). The cofactor is Cu(2+). Requires heme as cofactor.

It is found in the cell membrane. It catalyses the reaction 4 Fe(II)-[cytochrome c] + O2 + 8 H(+)(in) = 4 Fe(III)-[cytochrome c] + 2 H2O + 4 H(+)(out). Its pathway is energy metabolism; oxidative phosphorylation. Cytochrome c oxidase is the component of the respiratory chain that catalyzes the reduction of oxygen to water. Subunits 1-3 form the functional core of the enzyme complex. CO I is the catalytic subunit of the enzyme. Electrons originating in cytochrome c are transferred via the copper A center of subunit 2 and heme A of subunit 1 to the bimetallic center formed by heme A3 and copper B. The sequence is that of Cytochrome c oxidase subunit 1 (ctaD) from Corynebacterium glutamicum (strain ATCC 13032 / DSM 20300 / JCM 1318 / BCRC 11384 / CCUG 27702 / LMG 3730 / NBRC 12168 / NCIMB 10025 / NRRL B-2784 / 534).